The following is a 299-amino-acid chain: MLGGIEAGGTKFVCAVGREDGTIIDRIEFPTKMPDETIEKVIQYFSQFSLQAIGIGSFGPVDNDKTSQTYGTITATPKAGWRHYPFLQTVKNEMKIPVGFSTDVNAAALGEFLFGEAKGLDSCLYITIGTGIGAGAIVEGRLLQGLSHPEMGHIYIRRHPDDVYQGKCPYHGDCFEGLASGPAIEARWGKKAADLSDIAQVWELEGYYIAQALAQYILILAPKKIILGGGVMQQKQVFSYIYQYVPKIMNSYLDFSELSDDISDYIVPPRLGSNAGIIGTLVLAHQALQAEAASGEVRS.

An ATP-binding site is contributed by Thr130. Residues His153, Cys168, His171, and Cys174 each contribute to the Zn(2+) site. Residues Pro182 and 230–234 (GVMQQ) each bind ATP.

This sequence belongs to the ROK (NagC/XylR) family. The cofactor is Mg(2+).

It catalyses the reaction D-fructose + ATP = D-fructose 6-phosphate + ADP + H(+). Its activity is regulated as follows. Inhibited by zinc ions. Its function is as follows. Seems to be involved in the degradation of glucomannan. The sequence is that of Putative fructokinase (gmuE) from Bacillus subtilis (strain 168).